We begin with the raw amino-acid sequence, 136 residues long: Large ribosomal subunit protein uL16c (136 aa).

It belongs to the universal ribosomal protein uL16 family. As to quaternary structure, part of the 50S ribosomal subunit.

It localises to the plastid. Its subcellular location is the chloroplast. This Phaseolus angularis (Azuki bean) protein is Large ribosomal subunit protein uL16c.